Consider the following 498-residue polypeptide: ATP synthase subunit alpha 1 (498 aa).

This sequence belongs to the ATPase alpha/beta chains family. In terms of assembly, F-type ATPases have 2 components, CF(1) - the catalytic core - and CF(0) - the membrane proton channel. CF(1) has five subunits: alpha(3), beta(3), gamma(1), delta(1), epsilon(1). CF(0) has three main subunits: a(1), b(2) and c(9-12). The alpha and beta chains form an alternating ring which encloses part of the gamma chain. CF(1) is attached to CF(0) by a central stalk formed by the gamma and epsilon chains, while a peripheral stalk is formed by the delta and b chains.

The protein resides in the cell membrane. The enzyme catalyses ATP + H2O + 4 H(+)(in) = ADP + phosphate + 5 H(+)(out). Functionally, produces ATP from ADP in the presence of a proton gradient across the membrane. The alpha chain is a regulatory subunit. This is ATP synthase subunit alpha 1 from Listeria monocytogenes serovar 1/2a (strain ATCC BAA-679 / EGD-e).